The chain runs to 215 residues: Cytochrome b6 (215 aa).

Residues 32–52 form a helical membrane-spanning segment; that stretch reads IFYCLGGITLTCFLVQVATGF. Cys-35 contacts heme c. Residues His-86 and His-100 each contribute to the heme b site. Transmembrane regions (helical) follow at residues 90–110, 116–136, and 186–206; these read ASMM…TGGF, LTWV…VTGY, and LHTF…FPMI. His-187 and His-202 together coordinate heme b.

This sequence belongs to the cytochrome b family. PetB subfamily. As to quaternary structure, the 4 large subunits of the cytochrome b6-f complex are cytochrome b6, subunit IV (17 kDa polypeptide, PetD), cytochrome f and the Rieske protein, while the 4 small subunits are PetG, PetL, PetM and PetN. The complex functions as a dimer. Heme b is required as a cofactor. Requires heme c as cofactor.

The protein localises to the plastid. It is found in the chloroplast thylakoid membrane. In terms of biological role, component of the cytochrome b6-f complex, which mediates electron transfer between photosystem II (PSII) and photosystem I (PSI), cyclic electron flow around PSI, and state transitions. This is Cytochrome b6 from Vitis vinifera (Grape).